The sequence spans 403 residues: Ribonuclease T2-like (403 aa).

The first 19 residues, 1-19 (MLALILTISICIFLKGSTC), serve as a signal peptide directing secretion. Cystine bridges form between C36/C55, C44/C91, C54/C158, and C99/C150. Residue N78 is glycosylated (N-linked (GlcNAc...) asparagine). Catalysis depends on residues H84, E143, and H147. N-linked (GlcNAc...) asparagine glycosylation occurs at N175. C224 and C259 are oxidised to a cystine. The tract at residues 268-288 (PKNGFNPGPQPPKSPRKGYLE) is disordered.

The protein belongs to the RNase T2 family.

It is found in the vacuole lumen. The protein resides in the cytoplasm. The catalysed reaction is a ribonucleotidyl-ribonucleotide-RNA + H2O = a 3'-end 3'-phospho-ribonucleotide-RNA + a 5'-end dephospho-ribonucleoside-RNA + H(+). Functionally, rnase which modulates cell survival under stress conditions. Released from the vacuole to the cytoplasm during stress to promote tRNA and rRNA cleavage and to activate separately a downstream pathway that promotes cell death. Involved in cell size, vacuolar morphology and growth at high temperatures and high salt concentration. The polypeptide is Ribonuclease T2-like (RNY1) (Debaryomyces hansenii (strain ATCC 36239 / CBS 767 / BCRC 21394 / JCM 1990 / NBRC 0083 / IGC 2968) (Yeast)).